The following is an 896-amino-acid chain: Lipoxygenase 2, chloroplastic (896 aa).

A chloroplast-targeting transit peptide spans 1–56; it reads MYCRESLSSLQTLNVAKSLSSLFPKQSALINPISAGRRNNLPRPNLRRRCKVTASR. One can recognise a PLAT domain in the interval 79 to 199; that stretch reads ITAQEEFLEG…VDPTKRIFFS (121 aa). Positions 175–232 are EIF4E2 binding; it reads GSITFTCESWVAPKSVDPTKRIFFSDKSYLPSQTPEPLKKYRKEELETLQGKNREEVG. The Lipoxygenase domain occupies 202–896; it reads SYLPSQTPEP…GMGVPYSISI (695 aa). Residues His-554, His-559, His-746, Asn-750, and Ile-896 each coordinate Fe cation.

Belongs to the lipoxygenase family. In terms of assembly, interacts with EIF4E2. Requires Fe cation as cofactor. As to expression, in leaves and inflorescences but not abundant in seeds, roots and stems.

It localises to the plastid. The protein localises to the chloroplast. It is found in the cytoplasm. It catalyses the reaction (9Z,12Z)-octadecadienoate + O2 = (13S)-hydroperoxy-(9Z,11E)-octadecadienoate. It carries out the reaction (9Z,12Z,15Z)-octadecatrienoate + O2 = (13S)-hydroperoxy-(9Z,11E,15Z)-octadecatrienoate. Its pathway is lipid metabolism; oxylipin biosynthesis. Its function is as follows. 13S-lipoxygenase that can use linolenic acid as substrates. Plant lipoxygenases may be involved in a number of diverse aspects of plant physiology including growth and development, pest resistance, and senescence or responses to wounding. Catalyzes the hydroperoxidation of lipids containing a cis,cis-1,4-pentadiene structure. Required for the wound-induced synthesis of jasmonic acid (JA) in leaves. The sequence is that of Lipoxygenase 2, chloroplastic (LOX2) from Arabidopsis thaliana (Mouse-ear cress).